The chain runs to 243 residues: 1-(5-phosphoribosyl)-5-[(5-phosphoribosylamino)methylideneamino] imidazole-4-carboxamide isomerase (243 aa).

The active-site Proton acceptor is the D8. Catalysis depends on D129, which acts as the Proton donor.

Belongs to the HisA/HisF family.

It localises to the cytoplasm. The catalysed reaction is 1-(5-phospho-beta-D-ribosyl)-5-[(5-phospho-beta-D-ribosylamino)methylideneamino]imidazole-4-carboxamide = 5-[(5-phospho-1-deoxy-D-ribulos-1-ylimino)methylamino]-1-(5-phospho-beta-D-ribosyl)imidazole-4-carboxamide. It functions in the pathway amino-acid biosynthesis; L-histidine biosynthesis; L-histidine from 5-phospho-alpha-D-ribose 1-diphosphate: step 4/9. This chain is 1-(5-phosphoribosyl)-5-[(5-phosphoribosylamino)methylideneamino] imidazole-4-carboxamide isomerase, found in Brucella anthropi (strain ATCC 49188 / DSM 6882 / CCUG 24695 / JCM 21032 / LMG 3331 / NBRC 15819 / NCTC 12168 / Alc 37) (Ochrobactrum anthropi).